A 98-amino-acid polypeptide reads, in one-letter code: NADH-ubiquinone oxidoreductase chain 4L (98 aa).

3 consecutive transmembrane segments (helical) span residues 1-21 (MSLV…GLLM), 25-45 (HLMS…VMAT), and 59-81 (MPII…LVMV).

This sequence belongs to the complex I subunit 4L family. As to quaternary structure, core subunit of respiratory chain NADH dehydrogenase (Complex I) which is composed of 45 different subunits.

The protein resides in the mitochondrion inner membrane. It carries out the reaction a ubiquinone + NADH + 5 H(+)(in) = a ubiquinol + NAD(+) + 4 H(+)(out). In terms of biological role, core subunit of the mitochondrial membrane respiratory chain NADH dehydrogenase (Complex I) which catalyzes electron transfer from NADH through the respiratory chain, using ubiquinone as an electron acceptor. Part of the enzyme membrane arm which is embedded in the lipid bilayer and involved in proton translocation. This chain is NADH-ubiquinone oxidoreductase chain 4L (MT-ND4L), found in Equus caballus (Horse).